The primary structure comprises 347 residues: Probable 3-hydroxyisobutyrate dehydrogenase, mitochondrial (347 aa).

A mitochondrion-targeting transit peptide spans 1–34; sequence MAIRRAQTLLCLSKFKTNFVSGSLHRFSSSSQNS. Residues 38–67, 101–102, and threonine 134 contribute to the NAD(+) site; these read QNVG…TVHD and LP. Residue lysine 219 is part of the active site. Lysine 294 is an NAD(+) binding site.

This sequence belongs to the HIBADH-related family. 3-hydroxyisobutyrate dehydrogenase subfamily.

The protein resides in the mitochondrion. The catalysed reaction is 3-hydroxy-2-methylpropanoate + NAD(+) = 2-methyl-3-oxopropanoate + NADH + H(+). It functions in the pathway amino-acid degradation; L-valine degradation. The chain is Probable 3-hydroxyisobutyrate dehydrogenase, mitochondrial from Arabidopsis thaliana (Mouse-ear cress).